The primary structure comprises 179 residues: uncharacterized protein (179 aa).

This is an uncharacterized protein from Escherichia coli (strain K12).